The primary structure comprises 341 residues: Dihydroorotate dehydrogenase (quinone) (341 aa).

Residues 62 to 66 (AGMDK) and T86 contribute to the FMN site. A substrate-binding site is contributed by K66. 111-115 (NRMGF) is a binding site for substrate. Residues N139 and N172 each contribute to the FMN site. N172 is a binding site for substrate. S175 (nucleophile) is an active-site residue. N177 is a binding site for substrate. Residues K217 and T245 each coordinate FMN. Substrate is bound at residue 246–247 (NT). FMN-binding positions include G268, G297, and 318–319 (YS).

It belongs to the dihydroorotate dehydrogenase family. Type 2 subfamily. As to quaternary structure, monomer. The cofactor is FMN.

The protein localises to the cell membrane. It carries out the reaction (S)-dihydroorotate + a quinone = orotate + a quinol. Its pathway is pyrimidine metabolism; UMP biosynthesis via de novo pathway; orotate from (S)-dihydroorotate (quinone route): step 1/1. Functionally, catalyzes the conversion of dihydroorotate to orotate with quinone as electron acceptor. This is Dihydroorotate dehydrogenase (quinone) from Shewanella loihica (strain ATCC BAA-1088 / PV-4).